The primary structure comprises 338 residues: Tetraacyldisaccharide 4'-kinase (338 aa).

ATP is bound at residue 63-70 (TVGGSGKT).

It belongs to the LpxK family.

It carries out the reaction a lipid A disaccharide + ATP = a lipid IVA + ADP + H(+). It functions in the pathway glycolipid biosynthesis; lipid IV(A) biosynthesis; lipid IV(A) from (3R)-3-hydroxytetradecanoyl-[acyl-carrier-protein] and UDP-N-acetyl-alpha-D-glucosamine: step 6/6. Its function is as follows. Transfers the gamma-phosphate of ATP to the 4'-position of a tetraacyldisaccharide 1-phosphate intermediate (termed DS-1-P) to form tetraacyldisaccharide 1,4'-bis-phosphate (lipid IVA). This Shewanella loihica (strain ATCC BAA-1088 / PV-4) protein is Tetraacyldisaccharide 4'-kinase.